Here is a 464-residue protein sequence, read N- to C-terminus: Glutamate--tRNA ligase (464 aa).

The 'HIGH' region motif lies at Pro-11 to Gly-21. The short motif at Lys-253 to Arg-257 is the 'KMSKS' region element. Lys-256 is an ATP binding site.

Belongs to the class-I aminoacyl-tRNA synthetase family. Glutamate--tRNA ligase type 1 subfamily. In terms of assembly, monomer.

It is found in the cytoplasm. The catalysed reaction is tRNA(Glu) + L-glutamate + ATP = L-glutamyl-tRNA(Glu) + AMP + diphosphate. Catalyzes the attachment of glutamate to tRNA(Glu) in a two-step reaction: glutamate is first activated by ATP to form Glu-AMP and then transferred to the acceptor end of tRNA(Glu). This chain is Glutamate--tRNA ligase, found in Metamycoplasma arthritidis (strain 158L3-1) (Mycoplasma arthritidis).